The primary structure comprises 489 residues: Phosphoenolpyruvate carboxykinase (ATP) (489 aa).

The substrate site is built by R53 and Y159. ATP-binding positions include H185, 208–216 (GLSGTGKTT), D258, R300, 409–410 (KI), and S415. R300 contributes to the substrate binding site.

Belongs to the phosphoenolpyruvate carboxykinase (ATP) family.

The protein resides in the cytoplasm. The catalysed reaction is oxaloacetate + ATP = phosphoenolpyruvate + ADP + CO2. It functions in the pathway carbohydrate biosynthesis; gluconeogenesis. In terms of biological role, involved in the gluconeogenesis. Catalyzes the conversion of oxaloacetate (OAA) to phosphoenolpyruvate (PEP) through direct phosphoryl transfer between the nucleoside triphosphate and OAA. The sequence is that of Phosphoenolpyruvate carboxykinase (ATP) from Aeropyrum pernix (strain ATCC 700893 / DSM 11879 / JCM 9820 / NBRC 100138 / K1).